Reading from the N-terminus, the 365-residue chain is Histidinol-phosphate aminotransferase (365 aa).

The interval 1 to 21 (MSRPVPNPGILDIAPYTPGKS) is disordered. Lys221 carries the N6-(pyridoxal phosphate)lysine modification.

This sequence belongs to the class-II pyridoxal-phosphate-dependent aminotransferase family. Histidinol-phosphate aminotransferase subfamily. In terms of assembly, homodimer. Requires pyridoxal 5'-phosphate as cofactor.

The enzyme catalyses L-histidinol phosphate + 2-oxoglutarate = 3-(imidazol-4-yl)-2-oxopropyl phosphate + L-glutamate. The protein operates within amino-acid biosynthesis; L-histidine biosynthesis; L-histidine from 5-phospho-alpha-D-ribose 1-diphosphate: step 7/9. This is Histidinol-phosphate aminotransferase from Rhodopseudomonas palustris (strain ATCC BAA-98 / CGA009).